Consider the following 309-residue polypeptide: Metal ABC transporter substrate-binding lipoprotein FimA (309 aa).

Positions 1–20 (MKKIASVLALFVALLFGLLA) are cleaved as a signal peptide. The N-palmitoyl cysteine moiety is linked to residue C21. A lipid anchor (S-diacylglycerol cysteine) is attached at C21. Positions 67, 139, 205, and 280 each coordinate a divalent metal cation.

This sequence belongs to the bacterial solute-binding protein 9 family. Lipoprotein receptor antigen (Lrai) subfamily.

Its subcellular location is the cell membrane. Functionally, part of an ATP-binding cassette (ABC) transport system involved in metal import. Binds a metal with high affinity and specificity and delivers it to the membrane permease for translocation into the cytoplasm. Also acts as an adhesin which is involved on adherence to extracellular matrix. It is an important factor in pathogenesis and infection. May contribute to the formation and accumulation of dental plaque. The polypeptide is Metal ABC transporter substrate-binding lipoprotein FimA (fimA) (Streptococcus parasanguinis).